Reading from the N-terminus, the 953-residue chain is MGLKDYYTWKFPNIPEHVAQELDQLGRSLVVVGVIGRSRCVLANKMRAFGMEPPVDHEPTDGQLQCYYKPGTSTLLLHFETTFDDAILGQQIDETMEQDGAPFDFDGFYERMKCRFVRMMLLALHVCHILVYVETGQTFDLSLVTIFQLMKFGREHHLIQFLPSLLKETPAGRLLGEKCRLCTPRILFLFENFTQEEGKTRECVSACEFQTEDSIYELLRHHQIITNSSSSSLLALPNNKQFVFYNAHDQLHADRLLQSIEFLNLDMRKVDVKEEDDDLEVLELAPFNGFVKSFGESFENTNYEEQQYKTEHTAWHFLQRHVQDALLGCFDEGSFKQVPQRGQLQLLNAQEWHDCIAELHKLLVSSAGTQESLNEIRNEDYQVFLQSFDESLNYEKKFWAHLCEIGLKMGIEAYKKAAPAIYGSSMHQQLLAEATLAFEEEGRGPPAEASIAKMTATCLRHWQDGRQQCEQLSLRSQPCTQPKEMPHDKHNSGVIHVSSCNCGRTQGRREDPFSLRQANYEFYEHMVKMCNLCVKVKQFKFPIFEPTNNEYRAAAFEVAFPLLHAGKNRLAEDAELDPDEEDEELPTGEREEQHITQSNGCSQPLSPTFGSDLNMSIAGFGVSLNESEPCFDQSSSSEAESTCSGTSSEESNTELVLQLKEPAKKHEESCDPDSIAPLPSMCLTSTTEYLPGLVHTLSKVGLLPLFPSWSLACVGPSSIYSHNTGLQEHFQSGFLSGANFLLPWDVQLRLVHATKHYHNSHQPHMSKKQQRYRKHGDRMVLKIFVGFEYECSRGHRFMMCRPDRVLRGGADIERDTCSKMVHTNMPLYYPCPCRSQNNYLAQLMRIHVVTPKAPVNIIVDPKVCMGKDKYTFTLGSMVPPRLSQSAYWILRLPYVYQGDDALIAPPEKLEPDDIMAGGYLLAGMFGIAETDPTLDLNDQGHLDTNELGTFTRI.

Disordered stretches follow at residues 571–604 (AEDA…CSQP) and 629–653 (PCFD…ESNT). Residues 573 to 586 (DAELDPDEEDEELP) are compositionally biased toward acidic residues. Residues 595 to 604 (ITQSNGCSQP) show a composition bias toward polar residues. Residues 634–653 (SSSSEAESTCSGTSSEESNT) are compositionally biased toward low complexity.

This sequence belongs to the SMG8 family.

Its function is as follows. Involved in nonsense-mediated decay (NMD) of mRNAs containing premature stop codons. Probable component of kinase complex containing nonC and recruited to stalled ribosomes. The polypeptide is Nonsense-mediated mRNA decay factor SMG8 (Drosophila pseudoobscura pseudoobscura (Fruit fly)).